Reading from the N-terminus, the 854-residue chain is MNKSTSSLDYIEKLPLPAEQAEVLREKLPQAAWNDQAVLHQALSEGSQPEGNQVNVQAEDDVALHSVQARLEMAWADGLDNGKQLGTDREGRAALKAMPVITRASMFPDVWRTNPLIRWWESLLGRTVPPRPHYSPEEKISENRWRLVGTIRRYILLALTLFQTAIATWYMKTILPYQGWALIDPFEMAGQPWTRSLMQLLPYVLQSGILVLFAVLFCWVSAGFWTALMGFLQLLIGRDKYSISSTTVGDEALNPEHRTALIMPICNEDVERVFAGLRATYESVEATGNLEHFDIYVLSDSNDPDICVAEQKAWMELCRDVGGAGRIFYRRRRRRVKRKSGNIDDFCRRWGNQYSYMVILDADSVMSGECLTSLVRLMEANPNAGIIQSSPKASGMDTLYARCQQFATRVYGPLFTAGLHFWQLGESHYWGHNAIIRVKPFIEHCALAPLPGEGSFAGAILSHDFVEAALMRRAGWGVWIAYDLPGSYEELPPNLLDELKRDRRWCHGNLMNFRLFLVKGMHPVHRAVFLTGVMSYLSAPLWFMFLVLSTALQVVHTLMEPQYFLQPRQLFPVWPQWRPELAIALFSTTLVLLFLPKLLSVILVWAKGAKEYGGAFRVFLSLLLEMLFSVLLAPVRMLFHTVFVVSAFLGWSVQWNSPQRDDDATPWSEAFVRHGSQLILGLVWAIGMAWLDLRFLWWLSPIVFSLILSPVVSVYSSRAALGLGCKRAKLLLIPEEFNPPRELVATDEYCRLNHQRRLDDGFMQAVFDPSVNALASAMATARHRFSRAIEDVREQNVREALNRKPEEVSNNQRLALLSDPVTISRMHYHVWQKPEAYAAWVEFYQKLPAPHIKS.

7 consecutive transmembrane segments (helical) span residues 155-175 (ILLALTLFQTAIATWYMKTIL), 209-229 (ILVLFAVLFCWVSAGFWTALM), 528-548 (VFLTGVMSYLSAPLWFMFLVL), 583-603 (IALFSTTLVLLFLPKLLSVIL), 619-639 (FLSLLLEMLFSVLLAPVRMLF), 671-691 (FVRHGSQLILGLVWAIGMAWL), and 695-715 (FLWWLSPIVFSLILSPVVSVY).

This sequence belongs to the glycosyltransferase 2 family. OpgH subfamily.

It is found in the cell inner membrane. The protein operates within glycan metabolism; osmoregulated periplasmic glucan (OPG) biosynthesis. Its function is as follows. Involved in the biosynthesis of osmoregulated periplasmic glucans (OPGs). The polypeptide is Glucans biosynthesis glucosyltransferase H (Pectobacterium atrosepticum (strain SCRI 1043 / ATCC BAA-672) (Erwinia carotovora subsp. atroseptica)).